Here is a 1224-residue protein sequence, read N- to C-terminus: Dynactin subunit 1 (1224 aa).

The span at 1 to 10 shows a compositional bias: basic residues; the sequence is MAQSRRHPHG. Residues 1–30 form a disordered region; sequence MAQSRRHPHGRASSAGPRMSTEASSKPLKV. Positions 49–91 constitute a CAP-Gly domain; sequence GATLXATGKWVGVILDEAKGKNDGTVQGRKYFTCEENHGIFVR. 3 disordered regions span residues 100–217, 374–402, and 888–918; these read DGAD…RSQV, SASE…RQQR, and PHCH…PPAE. The span at 117 to 146 shows a compositional bias: basic residues; the sequence is VPKRHSRXAAKGSKLRGAKPKKTTARRPKP. Residues 148-180 show a composition bias toward low complexity; that stretch reads RTPTSAPSSGTAGPSGSASASGGEMSSSEPSTP. Residues 205 to 540 are a coiled coil; the sequence is SPTKEEENLR…QEASAEKQQQ (336 aa). A compositionally biased stretch (basic and acidic residues) spans 207–217; sequence TKEEENLRSQV. 2 coiled-coil regions span residues 936–1042 and 1081–1117; these read LKLE…EGLR and KDSP…LELA. A disordered region spans residues 1203–1224; the sequence is WCSSSRARASPPASACSPPRPS. Residues 1204–1224 show a composition bias toward low complexity; sequence CSSSRARASPPASACSPPRPS.

It belongs to the dynactin 150 kDa subunit family. In terms of assembly, monomer and homodimer. Subunit of dynactin, a multiprotein complex part of a tripartite complex with dynein and a adapter, such as BICDL1, BICD2 or HOOK3. The dynactin complex is built around ACTR1A/ACTB filament and consists of an actin-related filament composed of a shoulder domain, a pointed end and a barbed end. Its length is defined by its flexible shoulder domain. The soulder is composed of 2 DCTN1 subunits, 4 DCTN2 and 2 DCTN3. DCTN1/p150(glued) binds directly to microtubules and to cytoplasmic dynein. In terms of tissue distribution, ubiquitously expressed.

It is found in the cytoplasm. Its subcellular location is the cytoskeleton. It localises to the microtubule organizing center. The protein localises to the centrosome. The protein resides in the centriole. It is found in the spindle. Its subcellular location is the cell cortex. In terms of biological role, part of the dynactin complex that activates the molecular motor dynein for ultra-processive transport along microtubules. Plays a key role in dynein-mediated retrograde transport of vesicles and organelles along microtubules by recruiting and tethering dynein to microtubules. Binds to both dynein and microtubules providing a link between specific cargos, microtubules and dynein. Essential for targeting dynein to microtubule plus ends, recruiting dynein to membranous cargos and enhancing dynein processivity (the ability to move along a microtubule for a long distance without falling off the track). Can also act as a brake to slow the dynein motor during motility along the microtubule. Can regulate microtubule stability by promoting microtubule formation, nucleation and polymerization and by inhibiting microtubule catastrophe in neurons. Inhibits microtubule catastrophe by binding both to microtubules and to tubulin, leading to enhanced microtubule stability along the axon. Plays a role in metaphase spindle orientation. Plays a role in centriole cohesion and subdistal appendage organization and function. Its recruitment to the centriole in a KIF3A-dependent manner is essential for the maintenance of centriole cohesion and the formation of subdistal appendage. Also required for microtubule anchoring at the mother centriole. Plays a role in primary cilia formation. In Gallus gallus (Chicken), this protein is Dynactin subunit 1 (DCTN1).